A 404-amino-acid chain; its full sequence is MRLCLFLCLVLLGPRMATLRRSQKKKIQEVPPAVTTAPPGSRDFVFDLYRALAAAAPAQNIFFSPLSITVSLAMLSLGAQSNTKAQILEGLGIGPGEGSEEELHSASQRLLRELQQPQDSLQLSLGNALFTKPRLPIQEAFLGAMRTLYLADTFPTNFEDPEGAKKKINDYVAKQTKGKIVDLIKSLDGTQVMVMVNYIFFKAKWETSFNLKSTHEQDFYVTPETVVRVPMMKQQDQFYYLLDRNLSCKVVGVPYQGNATAFFILPREGEMEQVENGLKEKTLKKWLRMPMKRRLELYLPKFSIEGSYQLEEVLPKLGIRDIFTSDADLTGISNHSSIRVSEMVHKAVVEVDESGTQAAAATGMVITFKSARLGSQRIVFNRPFLVLIVKNSKHILFLGKVTRP.

Residues 1 to 19 (MRLCLFLCLVLLGPRMATL) form the signal peptide. The propeptide at 20 to 24 (RRSQK) is removed in mature form. O-linked (GalNAc...) threonine glycans are attached at residues T35 and T36. Residues N245, N258, and N334 are each glycosylated (N-linked (GlcNAc...) asparagine).

The protein belongs to the serpin family. In terms of assembly, forms protease inhibiting heterodimers in extracellular body fluids with serine proteases such as activated protein C/coagulation factor V/F5, acrosin/ACR, chymotrypsinogen B/CTRB1, prothrombin/F2, factor Xa/F10, factor XI/F11, kallikrein/KLKB1, tissue kallikrein, trypsin/PRSS1, prostate specific antigen/KLK3, tissue plasminogen activator/PLAT and urinary plasminogen activator/PLAU. Forms membrane-anchored serine proteases inhibiting heterodimers with TMPRSS7 and TMPRSS11E. Interacts with SEMG2. Post-translationally, N-glycosylated; glycans consist of a mixture of sialylated bi- (including sialyl-Lewis X epitopes), tri- and tetra-antennary complex-type chains; affects the maximal heparin- and thrombomodulin-enhanced rates of thrombin inhibition. O-glycosylated; further modified with 2 sialic acid residues. Proteolytically cleaved at the N-terminus; inhibits slightly the heparin- and thrombomodulin-enhanced rates of thrombin inhibition. N- and O-glycosylated. In terms of processing, proteolytically cleaved. Inhibition of proteases is accompanied by formation of a stable enzyme-inhibitor complex and by degradation of the serpin to lower molecular weight derivatives. As to expression, expressed strongly in the liver, and moderately in the kidney and testis, but not in other tissues tested.

The protein localises to the secreted. The protein resides in the extracellular space. Its inhibitory activity is greatly enhanced in the presence of glycosaminoglycans, heparin, thrombomodulin and phospholipids vesicles. Its function is as follows. Heparin-dependent serine protease inhibitor acting in body fluids and secretions. Inactivates serine proteases by binding irreversibly to their serine activation site. Involved in the regulation of intravascular and extravascular proteolytic activities. Plays hemostatic roles in the blood plasma. Acts as a procoagulant and pro-inflammatory factor by inhibiting the anticoagulant activated protein C factor as well as the generation of activated protein C factor by the thrombin/thrombomodulin complex. Acts as an anticoagulant factor by inhibiting blood coagulation factors like prothrombin, factor XI, factor Xa, plasma kallikrein and fibrinolytic enzymes such as tissue- and urinary-type plasminogen activators. In seminal plasma, inactivates several serine proteases implicated in the reproductive system. Inhibits the serpin acrosin; indirectly protects component of the male genital tract from being degraded by excessive released acrosin. Inhibits tissue- and urinary-type plasminogen activator, prostate-specific antigen and kallikrein activities; has a control on the sperm motility and fertilization. Inhibits the activated protein C-catalyzed degradation of SEMG1 and SEMG2; regulates the degradation of semenogelin during the process of transfer of spermatozoa from the male reproductive tract into the female tract. In urine, inhibits urinary-type plasminogen activator and kallikrein activities. Inactivates membrane-anchored serine proteases activities such as MPRSS7 and TMPRSS11E. Inhibits urinary-type plasminogen activator-dependent tumor cell invasion and metastasis. May also play a non-inhibitory role in seminal plasma and urine as a hydrophobic hormone carrier by its binding to retinoic acid. This chain is Plasma serine protease inhibitor (SERPINA5), found in Bos taurus (Bovine).